The sequence spans 60 residues: Metallothionein A (60 aa).

The segment at 1–28 is beta; the sequence is MDPCECSKSGTCNCGGSCTCTNCSCKSC. C4, C6, C12, C14, C18, C20, C23, C25, C28, C32, C33, C35, C36, C40, C43, C47, C49, C54, C58, and C59 together coordinate a divalent metal cation. Positions 29–60 are alpha; it reads KKSCCPCCPSGCTKCASGCVCKGKTCDTSCCQ.

Belongs to the metallothionein superfamily. Type 1 family.

Functionally, metallothioneins have a high content of cysteine residues that bind various heavy metals. This Chionodraco rastrospinosus (Ocellated icefish) protein is Metallothionein A (mta).